Here is a 107-residue protein sequence, read N- to C-terminus: Parvalbumin beta 2 (107 aa).

S1 bears the N-acetylserine mark. EF-hand domains are found at residues 37 to 72 (XSPD…FSAS) and 89 to 107 (DADG…LVKQ). 11 residues coordinate Ca(2+): D50, D52, S54, F56, E58, E61, D89, D91, D93, M95, and E100.

Belongs to the parvalbumin family.

In muscle, parvalbumin is thought to be involved in relaxation after contraction. It binds two calcium ions. This is Parvalbumin beta 2 from Oncorhynchus mykiss (Rainbow trout).